The chain runs to 143 residues: ATP synthase subunit b' (143 aa).

Residues 6–26 traverse the membrane as a helical segment; that stretch reads ATLPVMALQFILLAVILNAVF.

It belongs to the ATPase B chain family. In terms of assembly, F-type ATPases have 2 components, F(1) - the catalytic core - and F(0) - the membrane proton channel. F(1) has five subunits: alpha(3), beta(3), gamma(1), delta(1), epsilon(1). F(0) has four main subunits: a(1), b(1), b'(1) and c(10-14). The alpha and beta chains form an alternating ring which encloses part of the gamma chain. F(1) is attached to F(0) by a central stalk formed by the gamma and epsilon chains, while a peripheral stalk is formed by the delta, b and b' chains.

Its subcellular location is the cellular thylakoid membrane. In terms of biological role, f(1)F(0) ATP synthase produces ATP from ADP in the presence of a proton or sodium gradient. F-type ATPases consist of two structural domains, F(1) containing the extramembraneous catalytic core and F(0) containing the membrane proton channel, linked together by a central stalk and a peripheral stalk. During catalysis, ATP synthesis in the catalytic domain of F(1) is coupled via a rotary mechanism of the central stalk subunits to proton translocation. Functionally, component of the F(0) channel, it forms part of the peripheral stalk, linking F(1) to F(0). The b'-subunit is a diverged and duplicated form of b found in plants and photosynthetic bacteria. This Microcystis aeruginosa (strain NIES-843 / IAM M-2473) protein is ATP synthase subunit b'.